Here is a 69-residue protein sequence, read N- to C-terminus: MRTLCSLLLIGCLLFSYDTPVVGFLRRSVSGFQECHSKGGYCYRYYCPRPHRRLGSCYPYAANCCRRRR.

The first 23 residues, 1–23, serve as a signal peptide directing secretion; the sequence is MRTLCSLLLIGCLLFSYDTPVVG. Intrachain disulfides connect Cys-35–Cys-64, Cys-42–Cys-57, and Cys-47–Cys-65.

The protein belongs to the beta-defensin family.

The protein localises to the secreted. Has antibacterial activity. The sequence is that of Beta-defensin 11 (Defb11) from Rattus norvegicus (Rat).